The chain runs to 380 residues: MTKKRYTLLKKDGKARRGEFVTPHGTIQTPIFMNVGTLAAIKGAVSSMDLKEIGCQVELSNTYHLHLRPGDKIVKQMGGLHNFMNWDRPILTDSGGFQVFSLAGMRKIKEEGVYFNSHIDGRKIFMGPEESMQIQSNLGSTIAMAFDECIPNPSTREYVEKSVARTTRWLERCKKEMDRLNSLDDTVNKEQMLFGINQGGVYEDIRIEHAKTIREMDLDGYAIGGLAVGETHEEMYRVIDAVVPHLPEDKPIYLMGVGLPSNILEAVERGVDFFDCVLPARNGRHGHVFTKEGKINLMNAKFELDARPIDEGCQCPACKNYTRAYIRHLFKAKEMLAMRLCVLHNLYFYNKLMEDIRDAIDGGYFAEFKAKKLEEWNGRA.

Residue Asp-93 is the Proton acceptor of the active site. Substrate contacts are provided by residues Asp-93 to Phe-97, Asp-147, Gln-198, and Gly-225. The interval Gly-256 to Asn-262 is RNA binding. The active-site Nucleophile is Asp-275. The segment at Ala-280–Arg-284 is RNA binding; important for wobble base 34 recognition. Cys-313, Cys-315, Cys-318, and His-344 together coordinate Zn(2+).

This sequence belongs to the queuine tRNA-ribosyltransferase family. In terms of assembly, homodimer. Within each dimer, one monomer is responsible for RNA recognition and catalysis, while the other monomer binds to the replacement base PreQ1. Requires Zn(2+) as cofactor.

The enzyme catalyses 7-aminomethyl-7-carbaguanine + guanosine(34) in tRNA = 7-aminomethyl-7-carbaguanosine(34) in tRNA + guanine. It functions in the pathway tRNA modification; tRNA-queuosine biosynthesis. Its function is as follows. Catalyzes the base-exchange of a guanine (G) residue with the queuine precursor 7-aminomethyl-7-deazaguanine (PreQ1) at position 34 (anticodon wobble position) in tRNAs with GU(N) anticodons (tRNA-Asp, -Asn, -His and -Tyr). Catalysis occurs through a double-displacement mechanism. The nucleophile active site attacks the C1' of nucleotide 34 to detach the guanine base from the RNA, forming a covalent enzyme-RNA intermediate. The proton acceptor active site deprotonates the incoming PreQ1, allowing a nucleophilic attack on the C1' of the ribose to form the product. After dissociation, two additional enzymatic reactions on the tRNA convert PreQ1 to queuine (Q), resulting in the hypermodified nucleoside queuosine (7-(((4,5-cis-dihydroxy-2-cyclopenten-1-yl)amino)methyl)-7-deazaguanosine). The protein is Queuine tRNA-ribosyltransferase of Clostridium perfringens (strain 13 / Type A).